The chain runs to 193 residues: Anthranilate synthase component 2 (193 aa).

Residues 3–193 (DILLLDNVDS…EQTLAWALAK (191 aa)) form the Glutamine amidotransferase type-1 domain. 57-59 (GPG) lines the L-glutamine pocket. Cys-84 functions as the Nucleophile; for GATase activity in the catalytic mechanism. L-glutamine contacts are provided by residues Gln-88 and 134 to 135 (SL). Catalysis depends on for GATase activity residues His-170 and Glu-172.

As to quaternary structure, heterotetramer consisting of two non-identical subunits: a beta subunit (TrpG) and a large alpha subunit (TrpE).

It catalyses the reaction chorismate + L-glutamine = anthranilate + pyruvate + L-glutamate + H(+). It participates in amino-acid biosynthesis; L-tryptophan biosynthesis; L-tryptophan from chorismate: step 1/5. In terms of biological role, part of a heterotetrameric complex that catalyzes the two-step biosynthesis of anthranilate, an intermediate in the biosynthesis of L-tryptophan. In the first step, the glutamine-binding beta subunit (TrpG) of anthranilate synthase (AS) provides the glutamine amidotransferase activity which generates ammonia as a substrate that, along with chorismate, is used in the second step, catalyzed by the large alpha subunit of AS (TrpE) to produce anthranilate. In the absence of TrpG, TrpE can synthesize anthranilate directly from chorismate and high concentrations of ammonia. In Serratia marcescens, this protein is Anthranilate synthase component 2 (trpG).